Reading from the N-terminus, the 134-residue chain is Ribosome-binding factor A (134 aa).

It belongs to the RbfA family. Monomer. Binds 30S ribosomal subunits, but not 50S ribosomal subunits or 70S ribosomes.

It is found in the cytoplasm. In terms of biological role, one of several proteins that assist in the late maturation steps of the functional core of the 30S ribosomal subunit. Associates with free 30S ribosomal subunits (but not with 30S subunits that are part of 70S ribosomes or polysomes). Required for efficient processing of 16S rRNA. May interact with the 5'-terminal helix region of 16S rRNA. The protein is Ribosome-binding factor A of Tolumonas auensis (strain DSM 9187 / NBRC 110442 / TA 4).